Here is a 295-residue protein sequence, read N- to C-terminus: Cop9 signalosome-interactor 1 (295 aa).

In terms of assembly, component of a COP9 signalosome-like (CSN) complex, composed of RRI1/CSN5, CSN9, RRI2/CSN10, PCI8/CSN11, CSN12 and CSI1. In the complex, it probably interacts directly with CSN9 and CSN12. Interacts also with RPN5.

Its subcellular location is the cytoplasm. It localises to the nucleus. Functionally, component of the COP9 signalosome (CSN) complex that acts as an regulator of the ubiquitin (Ubl) conjugation pathway by mediating the deneddylation of the cullin subunit of SCF-type E3 ubiquitin-protein ligase complexes The CSN complex is involved in the regulation of the mating pheromone response. This is Cop9 signalosome-interactor 1 (CSI1) from Saccharomyces cerevisiae (strain ATCC 204508 / S288c) (Baker's yeast).